We begin with the raw amino-acid sequence, 151 residues long: Protein SprT-like (151 aa).

The SprT-like domain maps to 6 to 147; the sequence is LQRMVENLSE…GHCNGKLRMK (142 aa). A Zn(2+)-binding site is contributed by H67. The active site involves E68. H71 provides a ligand contact to Zn(2+).

Belongs to the SprT family. It depends on Zn(2+) as a cofactor.

It is found in the cytoplasm. In Staphylococcus aureus (strain MRSA252), this protein is Protein SprT-like.